The sequence spans 228 residues: 5'-methylthioadenosine/S-adenosylhomocysteine nucleosidase (228 aa).

E11 serves as the catalytic Proton acceptor. Substrate is bound by residues G77, I151, and 172-173; that span reads ME. The active-site Proton donor is the D196.

The protein belongs to the PNP/UDP phosphorylase family. MtnN subfamily.

The enzyme catalyses S-adenosyl-L-homocysteine + H2O = S-(5-deoxy-D-ribos-5-yl)-L-homocysteine + adenine. It catalyses the reaction S-methyl-5'-thioadenosine + H2O = 5-(methylsulfanyl)-D-ribose + adenine. The catalysed reaction is 5'-deoxyadenosine + H2O = 5-deoxy-D-ribose + adenine. It participates in amino-acid biosynthesis; L-methionine biosynthesis via salvage pathway; S-methyl-5-thio-alpha-D-ribose 1-phosphate from S-methyl-5'-thioadenosine (hydrolase route): step 1/2. Catalyzes the irreversible cleavage of the glycosidic bond in both 5'-methylthioadenosine (MTA) and S-adenosylhomocysteine (SAH/AdoHcy) to adenine and the corresponding thioribose, 5'-methylthioribose and S-ribosylhomocysteine, respectively. Also cleaves 5'-deoxyadenosine, a toxic by-product of radical S-adenosylmethionine (SAM) enzymes, into 5-deoxyribose and adenine. This Staphylococcus epidermidis (strain ATCC 12228 / FDA PCI 1200) protein is 5'-methylthioadenosine/S-adenosylhomocysteine nucleosidase.